Reading from the N-terminus, the 263-residue chain is H-2 class II histocompatibility antigen, A-U beta chain (263 aa).

The first 27 residues, 1–27 (MALQIPSLLLLAAVVVLMVLSSPGTEG), serve as a signal peptide directing secretion. Positions 28–120 (GDSERHFVVQ…TEVPTSLRRL (93 aa)) are beta-1. Over 28 to 224 (GDSERHFVVQ…RAQSESARSK (197 aa)) the chain is Extracellular. 2 disulfide bridges follow: Cys42–Cys104 and Cys143–Cys199. Residue Asn46 is glycosylated (N-linked (GlcNAc...) asparagine). Residues 121–214 (EQPNVVISLS…SLKSPITVEW (94 aa)) are beta-2. One can recognise an Ig-like C1-type domain in the interval 123–211 (PNVVISLSRT…EHPSLKSPIT (89 aa)). Residues 215 to 224 (RAQSESARSK) are connecting peptide. The chain crosses the membrane as a helical span at residues 225-245 (MLSGIGGCVLGVIFLGLGLFI). Over 246–263 (RHRSQKGPRGPPPAGLLQ) the chain is Cytoplasmic.

The protein belongs to the MHC class II family.

Its subcellular location is the membrane. In Mus musculus (Mouse), this protein is H-2 class II histocompatibility antigen, A-U beta chain.